The following is a 239-amino-acid chain: DNA repair protein RecO (239 aa).

This sequence belongs to the RecO family.

Functionally, involved in DNA repair and RecF pathway recombination. The polypeptide is DNA repair protein RecO (Glaesserella parasuis serovar 5 (strain SH0165) (Haemophilus parasuis)).